We begin with the raw amino-acid sequence, 119 residues long: uncharacterized protein (119 aa).

The next 4 helical transmembrane spans lie at 3 to 23 (WVFL…MKLS), 29 to 49 (LIPS…LTLT), 58 to 78 (AYAV…FLFF), and 87 to 107 (VISI…EHVA).

Belongs to the drug/metabolite transporter (DMT) superfamily. Small multidrug resistance (SMR) (TC 2.A.7.1) family.

Its subcellular location is the cell membrane. This is an uncharacterized protein from Bacillus subtilis (strain 168).